A 74-amino-acid chain; its full sequence is U-scoloptoxin(09)-Sm3a (74 aa).

The N-terminal stretch at 1–22 (MNANSIFLCFFIMLIGCTLTHS) is a signal peptide.

The protein belongs to the scoloptoxin-09 family. Contains 3 disulfide bonds. As to expression, expressed by the venom gland.

Its subcellular location is the secreted. The protein is U-scoloptoxin(09)-Sm3a of Scolopendra morsitans (Tanzanian blue ringleg centipede).